Reading from the N-terminus, the 710-residue chain is Polyribonucleotide nucleotidyltransferase (710 aa).

Mg(2+) is bound by residues Asp485 and Asp491. Residues 552 to 611 (PKILTLTINPDKIRDVIGPSGKVINKIIEETGVKIDIEQDGTVYISSLDTAMNQKAKQII) form the KH domain. One can recognise an S1 motif domain in the interval 621–689 (GETYHGKVKR…NQGRVNLSRK (69 aa)).

It belongs to the polyribonucleotide nucleotidyltransferase family. It depends on Mg(2+) as a cofactor.

The protein resides in the cytoplasm. It catalyses the reaction RNA(n+1) + phosphate = RNA(n) + a ribonucleoside 5'-diphosphate. In terms of biological role, involved in mRNA degradation. Catalyzes the phosphorolysis of single-stranded polyribonucleotides processively in the 3'- to 5'-direction. The protein is Polyribonucleotide nucleotidyltransferase of Shouchella clausii (strain KSM-K16) (Alkalihalobacillus clausii).